The primary structure comprises 292 residues: Golgi to ER traffic protein 2 (292 aa).

The span at Met1 to Gln18 shows a compositional bias: basic and acidic residues. The tract at residues Met1–Pro80 is disordered. Residues Met1–Gln158 lie on the Cytoplasmic side of the membrane. Composition is skewed to polar residues over residues Arg29–Ser47 and Ala55–Thr71. The helical transmembrane segment at Trp159 to Tyr179 threads the bilayer. The Lumenal segment spans residues Ile180–Thr205. Residues Phe206–Met225 traverse the membrane as a helical segment. Residues Ser226–Asn268 lie on the Cytoplasmic side of the membrane. The chain crosses the membrane as a helical span at residues Gly269–Val289. At Leu290–Asn292 the chain is on the lumenal side.

It belongs to the GET2 family. As to quaternary structure, component of the Golgi to ER traffic (GET) complex, which is composed of GET1, GET2 and GET3. Within the complex, GET1 and GET2 form a heterotetramer which is stabilized by phosphatidylinositol binding and which binds to the GET3 homodimer.

The protein localises to the endoplasmic reticulum membrane. It is found in the golgi apparatus membrane. Required for the post-translational delivery of tail-anchored (TA) proteins to the endoplasmic reticulum. Together with GET1, acts as a membrane receptor for soluble GET3, which recognizes and selectively binds the transmembrane domain of TA proteins in the cytosol. The GET complex cooperates with the HDEL receptor ERD2 to mediate the ATP-dependent retrieval of resident ER proteins that contain a C-terminal H-D-E-L retention signal from the Golgi to the ER. In Clavispora lusitaniae (strain ATCC 42720) (Yeast), this protein is Golgi to ER traffic protein 2.